Reading from the N-terminus, the 295-residue chain is MLTALNRYWDYLRIERQMSPHTITNYQHQLDATIKILAQQDIHAWTQVTPSVVRFILAESKKQGLKEKSLALRLSALRRFLSFLVQQGELKVNPTTGISAPKQGKHLPKNMDGEQVQQLLANDSKEPIDIRDRAILELMYSSGLRLSELQGLDLNSINTRVREVRVIGKGNKERVVPFGRYASHAIQEWLKVRALFNPKDEALFVSQLGNRISHRAIQKRLETWGIRQGLNSHLNPHKLRHSFATHMLEASSDLRAVQELLGHSNLSTTQIYTHLNFQHLAEVYDQAHPRAKRKK.

In terms of domain architecture, Core-binding (CB) spans 1-85 (MLTALNRYWD…ALRRFLSFLV (85 aa)). The region spanning 106 to 285 (HLPKNMDGEQ…NFQHLAEVYD (180 aa)) is the Tyr recombinase domain. Catalysis depends on residues Arg145, Lys169, His237, Arg240, and His263. Tyr272 acts as the O-(3'-phospho-DNA)-tyrosine intermediate in catalysis.

Belongs to the 'phage' integrase family. XerC subfamily. Forms a cyclic heterotetrameric complex composed of two molecules of XerC and two molecules of XerD.

Its subcellular location is the cytoplasm. Its function is as follows. Site-specific tyrosine recombinase, which acts by catalyzing the cutting and rejoining of the recombining DNA molecules. The XerC-XerD complex is essential to convert dimers of the bacterial chromosome into monomers to permit their segregation at cell division. It also contributes to the segregational stability of plasmids. The protein is Tyrosine recombinase XerC of Haemophilus influenzae (strain PittEE).